The primary structure comprises 157 residues: AP-1 complex subunit sigma-2 (157 aa).

The protein belongs to the adaptor complexes small subunit family. Adaptor protein complex 1 (AP-1) is a heterotetramer composed of two large adaptins (gamma-type subunit AP1G1 and beta-type subunit AP1B1), a medium adaptin (mu-type subunit AP1M1 or AP1M2) and a small adaptin (sigma-type subunit AP1S1 or AP1S2 or AP1S3). Binds to MUC1. Widely expressed.

Its subcellular location is the golgi apparatus. The protein localises to the cytoplasmic vesicle membrane. It localises to the membrane. The protein resides in the clathrin-coated pit. Functionally, subunit of clathrin-associated adaptor protein complex 1 that plays a role in protein sorting in the late-Golgi/trans-Golgi network (TGN) and/or endosomes. The AP complexes mediate both the recruitment of clathrin to membranes and the recognition of sorting signals within the cytosolic tails of transmembrane cargo molecules. This is AP-1 complex subunit sigma-2 (AP1S2) from Homo sapiens (Human).